Here is a 464-residue protein sequence, read N- to C-terminus: Soluble pyridine nucleotide transhydrogenase (464 aa).

Residue 35–44 (DSRRQVGGNC) participates in FAD binding.

It belongs to the class-I pyridine nucleotide-disulfide oxidoreductase family. FAD is required as a cofactor.

The protein resides in the cytoplasm. The enzyme catalyses NAD(+) + NADPH = NADH + NADP(+). Conversion of NADPH, generated by peripheral catabolic pathways, to NADH, which can enter the respiratory chain for energy generation. The polypeptide is Soluble pyridine nucleotide transhydrogenase (Pseudomonas fluorescens (strain Pf0-1)).